Here is a 40-residue protein sequence, read N- to C-terminus: Snaclec LmrLEC-1 (40 aa).

Cysteines 2 and 13 form a disulfide.

The protein belongs to the snaclec family. In terms of assembly, dimer (non-covalently linked) of heterodimers of subunits alpha and beta (disulfide-linked). As to expression, expressed by the venom gland.

The protein localises to the secreted. Interferes with one step of hemostasis (modulation of platelet aggregation, or coagulation cascade, for example). In Lachesis muta rhombeata (Bushmaster), this protein is Snaclec LmrLEC-1.